Consider the following 330-residue polypeptide: MHFIDEVKIYIKGGNGGNGCVSFHREKFIDRGGPDGGDGGRGGSVIFRSNHHLNTLVNYRYKQHFTAENGENGKDSNRSGKSGKSLVLDVPIGTQIFSEDGNILFYDFTVDDQSFEIIKGGSGGLGNSHFKSSVNQAPRKRTEGEIAEEMWIHLSLKLLSDVGLVGLPNAGKSTFLSVVTAAKPKIADYPFTTLVPNLGVVYVDDEEFVIADIPGLIEGAHQGHGLGDKFLKHIERCNVLIHLIDGSSNDVVADYNTVRLELELYSDYLKNKIETICLNKCDVLTDEEIQEKINKLQKATNKEIFPISTCTNAGVNKIVKLALETIKNQK.

One can recognise an Obg domain in the interval 1–159 (MHFIDEVKIY…MWIHLSLKLL (159 aa)). An OBG-type G domain is found at 160-327 (SDVGLVGLPN…IVKLALETIK (168 aa)). Residues 166 to 173 (GLPNAGKS), 191 to 195 (FTTLV), 212 to 215 (DIPG), 279 to 282 (NKCD), and 308 to 310 (STC) each bind GTP. Positions 173 and 193 each coordinate Mg(2+).

The protein belongs to the TRAFAC class OBG-HflX-like GTPase superfamily. OBG GTPase family. Monomer. The cofactor is Mg(2+).

The protein localises to the cytoplasm. An essential GTPase which binds GTP, GDP and possibly (p)ppGpp with moderate affinity, with high nucleotide exchange rates and a fairly low GTP hydrolysis rate. Plays a role in control of the cell cycle, stress response, ribosome biogenesis and in those bacteria that undergo differentiation, in morphogenesis control. This chain is GTPase Obg, found in Rickettsia conorii (strain ATCC VR-613 / Malish 7).